We begin with the raw amino-acid sequence, 313 residues long: MRASEVIADIYPGGDKLRSARVSLLSLFFNHFFARPGYAAICSTGTQGPALCQLKVTAGPCFEQKTVVRRRVVVLVAEAGPHRQRQTDAPEGERVTCIQRYRNGKVGTQPLLLVIERITAGVLRARINPERQAAIHKILVSKRHPKRGVNFLIPVGCNAPRSPRAVLHQSTWKRGTAPINETRAIPRPAAVTSHDAAGATSCAYAAPAATPTPQRRPAESVSRVPRTVLAVSYVFSLHTFQKAAGNPHSLPKFYPPPANICRVLFLQEGRAPRTTAAYPVRACNILTGEVFSHTGEVLCANRACGASPTPSSM.

This is an uncharacterized protein from Treponema pallidum (strain Nichols).